Reading from the N-terminus, the 443-residue chain is Glutamate-1-semialdehyde 2,1-aminomutase (443 aa).

Lys281 carries the N6-(pyridoxal phosphate)lysine modification.

The protein belongs to the class-III pyridoxal-phosphate-dependent aminotransferase family. HemL subfamily. As to quaternary structure, homodimer. Pyridoxal 5'-phosphate serves as cofactor.

It localises to the cytoplasm. It catalyses the reaction (S)-4-amino-5-oxopentanoate = 5-aminolevulinate. It participates in porphyrin-containing compound metabolism; protoporphyrin-IX biosynthesis; 5-aminolevulinate from L-glutamyl-tRNA(Glu): step 2/2. This chain is Glutamate-1-semialdehyde 2,1-aminomutase, found in Leptospira interrogans serogroup Icterohaemorrhagiae serovar Lai (strain 56601).